The sequence spans 481 residues: Aspartyl/glutamyl-tRNA(Asn/Gln) amidotransferase subunit B (481 aa).

This sequence belongs to the GatB/GatE family. GatB subfamily. As to quaternary structure, heterotrimer of A, B and C subunits.

The enzyme catalyses L-glutamyl-tRNA(Gln) + L-glutamine + ATP + H2O = L-glutaminyl-tRNA(Gln) + L-glutamate + ADP + phosphate + H(+). It carries out the reaction L-aspartyl-tRNA(Asn) + L-glutamine + ATP + H2O = L-asparaginyl-tRNA(Asn) + L-glutamate + ADP + phosphate + 2 H(+). Functionally, allows the formation of correctly charged Asn-tRNA(Asn) or Gln-tRNA(Gln) through the transamidation of misacylated Asp-tRNA(Asn) or Glu-tRNA(Gln) in organisms which lack either or both of asparaginyl-tRNA or glutaminyl-tRNA synthetases. The reaction takes place in the presence of glutamine and ATP through an activated phospho-Asp-tRNA(Asn) or phospho-Glu-tRNA(Gln). This Pseudomonas fluorescens (strain Pf0-1) protein is Aspartyl/glutamyl-tRNA(Asn/Gln) amidotransferase subunit B.